A 334-amino-acid chain; its full sequence is Ketol-acid reductoisomerase (NADP(+)) (334 aa).

Positions 1–181 (MTTVYYDQDV…GATRAGVIET (181 aa)) constitute a KARI N-terminal Rossmann domain. Residues 25–28 (YGSQ), arginine 48, serine 52, and 82–85 (DEIQ) contribute to the NADP(+) site. Histidine 107 is an active-site residue. Position 133 (glycine 133) interacts with NADP(+). Positions 182–327 (TFKEETETDL…RELREMMPFI (146 aa)) constitute a KARI C-terminal knotted domain. Mg(2+) is bound by residues aspartate 190, glutamate 194, glutamate 226, and glutamate 230. A substrate-binding site is contributed by serine 251.

The protein belongs to the ketol-acid reductoisomerase family. The cofactor is Mg(2+).

It carries out the reaction (2R)-2,3-dihydroxy-3-methylbutanoate + NADP(+) = (2S)-2-acetolactate + NADPH + H(+). It catalyses the reaction (2R,3R)-2,3-dihydroxy-3-methylpentanoate + NADP(+) = (S)-2-ethyl-2-hydroxy-3-oxobutanoate + NADPH + H(+). It participates in amino-acid biosynthesis; L-isoleucine biosynthesis; L-isoleucine from 2-oxobutanoate: step 2/4. It functions in the pathway amino-acid biosynthesis; L-valine biosynthesis; L-valine from pyruvate: step 2/4. Involved in the biosynthesis of branched-chain amino acids (BCAA). Catalyzes an alkyl-migration followed by a ketol-acid reduction of (S)-2-acetolactate (S2AL) to yield (R)-2,3-dihydroxy-isovalerate. In the isomerase reaction, S2AL is rearranged via a Mg-dependent methyl migration to produce 3-hydroxy-3-methyl-2-ketobutyrate (HMKB). In the reductase reaction, this 2-ketoacid undergoes a metal-dependent reduction by NADPH to yield (R)-2,3-dihydroxy-isovalerate. The polypeptide is Ketol-acid reductoisomerase (NADP(+)) (Staphylococcus aureus (strain USA300)).